The primary structure comprises 296 residues: GTP cyclohydrolase FolE2 (296 aa).

The protein belongs to the GTP cyclohydrolase IV family.

It catalyses the reaction GTP + H2O = 7,8-dihydroneopterin 3'-triphosphate + formate + H(+). Its pathway is cofactor biosynthesis; 7,8-dihydroneopterin triphosphate biosynthesis; 7,8-dihydroneopterin triphosphate from GTP: step 1/1. Converts GTP to 7,8-dihydroneopterin triphosphate. The polypeptide is GTP cyclohydrolase FolE2 (Ectopseudomonas mendocina (strain ymp) (Pseudomonas mendocina)).